The following is a 461-amino-acid chain: Coagulation factor IX (461 aa).

Positions 1-28 (MQRVNMIMAESPGLITICLLGYLLSAEC) are cleaved as a signal peptide. The propeptide occupies 29-46 (TVFLDHENANKILNRPKR). Ca(2+) contacts are provided by tyrosine 47, asparagine 48, glutamate 53, glutamate 54, glutamate 61, glutamate 63, glutamate 66, glutamate 67, glutamate 72, glutamate 73, and glutamate 76. Residues 47 to 92 (YNSGKLEEFVQGNLERECMEEKCSFEEAREVFENTERTTEFWKQYV) enclose the Gla domain. 4-carboxyglutamate is present on residues glutamate 53, glutamate 54, glutamate 61, glutamate 63, glutamate 66, glutamate 67, glutamate 72, glutamate 73, glutamate 76, glutamate 79, and glutamate 82. Glutamate 61 is a Mg(2+) binding site. An intrachain disulfide couples cysteine 64 to cysteine 69. Residue glutamate 66 coordinates Mg(2+). Residue glutamate 72 coordinates Mg(2+). Residue glutamate 76 coordinates Mg(2+). A Ca(2+)-binding site is contributed by glutamate 82. Glutamate 82 provides a ligand contact to Mg(2+). Residue threonine 85 is glycosylated (O-linked (GalNAc...) threonine). Positions 86, 93, 94, and 96 each coordinate Ca(2+). Residue glutamate 86 is modified to 4-carboxyglutamate. Position 86 (glutamate 86) interacts with Mg(2+). In terms of domain architecture, EGF-like 1; calcium-binding spans 93–129 (DGDQCESNPCLNGGSCKDDINSYECWCPFGFEGKNCE). 10 disulfide bridges follow: cysteine 97–cysteine 108, cysteine 102–cysteine 117, cysteine 119–cysteine 128, cysteine 134–cysteine 145, cysteine 141–cysteine 155, cysteine 157–cysteine 170, cysteine 178–cysteine 335, cysteine 252–cysteine 268, cysteine 382–cysteine 396, and cysteine 407–cysteine 435. O-linked (Glc...) serine glycosylation is present at serine 99. Serine 107 carries an O-linked (Fuc...) serine glycan. Residues aspartate 110 and aspartate 111 each contribute to the Ca(2+) site. Aspartate 110 is modified ((3R)-3-hydroxyaspartate). Serine 114 is modified (phosphoserine). In terms of domain architecture, EGF-like 2 spans 130-171 (LDVTCNIKNGRCEQFCKNSADNKVVCSCTEGYRLAENQKSCE). The propeptide at 192–226 (AETVFPDVDYVNSTEAETILDNITQSTQSFNDFTR) is activation peptide. Residue tyrosine 201 is modified to Sulfotyrosine. At serine 204 the chain carries Phosphoserine. At threonine 205 the chain carries Phosphothreonine; alternate. O-linked (GalNAc...) threonine; alternate glycosylation occurs at threonine 205. N-linked (GlcNAc...) asparagine glycosylation occurs at asparagine 213. O-linked (GalNAc...) threonine glycosylation is found at threonine 215 and threonine 225. The region spanning 227 to 459 (VVGGEDAKPG…YVNWIKEKTK (233 aa)) is the Peptidase S1 domain. The active-site Charge relay system is the histidine 267. 5 residues coordinate Ca(2+): glutamate 281, asparagine 283, glutamate 286, glutamate 288, and glutamate 291. Catalysis depends on aspartate 315, which acts as the Charge relay system. The Charge relay system role is filled by serine 411.

The protein belongs to the peptidase S1 family. Heterodimer of a light chain and a heavy chain; disulfide-linked. Interacts (inactive and activated) with F11 (activated) in calcium-dependent manner. Interacts with SERPINC1. Activated by factor XIa, which excises the activation peptide. The propeptide can also be removed by snake venom protease. Post-translationally, the iron and 2-oxoglutarate dependent 3-hydroxylation of aspartate and asparagine is (R) stereospecific within EGF domains. Activated by coagulation factor VIIa-tissue factor (F7-F3) complex in calcium-dependent manner. In terms of processing, predominantly O-glucosylated at Ser-99 by POGLUT1 in vitro.

The protein localises to the secreted. The catalysed reaction is Selective cleavage of Arg-|-Ile bond in factor X to form factor Xa.. Factor IX is a vitamin K-dependent plasma protein that participates in the intrinsic pathway of blood coagulation by converting factor X to its active form in the presence of Ca(2+) ions, phospholipids, and factor VIIIa. The polypeptide is Coagulation factor IX (F9) (Pan troglodytes (Chimpanzee)).